The following is a 484-amino-acid chain: Cobyric acid synthase (484 aa).

In terms of domain architecture, GATase cobBQ-type spans 246-437; the sequence is ALRVVVPALP…VHGLFDTPAA (192 aa). Cysteine 327 (nucleophile) is an active-site residue. Histidine 429 is an active-site residue.

Belongs to the CobB/CobQ family. CobQ subfamily.

It participates in cofactor biosynthesis; adenosylcobalamin biosynthesis. Functionally, catalyzes amidations at positions B, D, E, and G on adenosylcobyrinic A,C-diamide. NH(2) groups are provided by glutamine, and one molecule of ATP is hydrogenolyzed for each amidation. In Paraburkholderia phymatum (strain DSM 17167 / CIP 108236 / LMG 21445 / STM815) (Burkholderia phymatum), this protein is Cobyric acid synthase.